The following is a 253-amino-acid chain: Indole-3-glycerol phosphate synthase (253 aa).

This sequence belongs to the TrpC family.

It catalyses the reaction 1-(2-carboxyphenylamino)-1-deoxy-D-ribulose 5-phosphate + H(+) = (1S,2R)-1-C-(indol-3-yl)glycerol 3-phosphate + CO2 + H2O. It participates in amino-acid biosynthesis; L-tryptophan biosynthesis; L-tryptophan from chorismate: step 4/5. This chain is Indole-3-glycerol phosphate synthase, found in Petrotoga mobilis (strain DSM 10674 / SJ95).